Reading from the N-terminus, the 168-residue chain is Photosystem I assembly protein Ycf3 (168 aa).

TPR repeat units follow at residues 35-68, 72-105, and 120-153; these read AFTYYRDGMSAQSEGNYAEALQNYYEAMRLEIDP, SYILYNIGLIHTSNGEHTKALEYYFRALERNPFL, and GEQAIRQGDSEIAEAWFDQAAEYWKQAMALTPGN.

It belongs to the Ycf3 family.

The protein resides in the plastid. The protein localises to the chloroplast thylakoid membrane. Functionally, essential for the assembly of the photosystem I (PSI) complex. May act as a chaperone-like factor to guide the assembly of the PSI subunits. In Panax ginseng (Korean ginseng), this protein is Photosystem I assembly protein Ycf3.